Here is a 150-residue protein sequence, read N- to C-terminus: uncharacterized protein (150 aa).

4 helical membrane-spanning segments follow: residues 12 to 30 (IVQRIISLLTIILLAYFLF), 40 to 62 (RLLSLATIVLLASFLFIIFLVLF), 74 to 96 (IRRTIAIVTTSFYFGTLSMVLSG), and 106 to 128 (ALIDGLKWAFMVVVAFYFGSRAV).

The protein localises to the cell membrane. This is an uncharacterized protein from Archaeoglobus fulgidus (strain ATCC 49558 / DSM 4304 / JCM 9628 / NBRC 100126 / VC-16).